Here is a 508-residue protein sequence, read N- to C-terminus: CXXC-type zinc finger protein 1 (508 aa).

A CXXC-type zinc finger spans residues 10 to 47; that stretch reads EDVWKERCMNCIRCNDEKNCGTCWPCRNGKTCDMRKCF. 2 disordered regions span residues 95 to 156 and 453 to 508; these read QQVE…EPDK and KSQS…TQNN. Low complexity-rich tracts occupy residues 113–123 and 454–481; these read AAAAAQQRKAN and SQST…SSSS.

In terms of assembly, component of the SET2 complex (also known as the SET1/COMPASS complex), which contains at least set-2, swd-2.1, cfp-1, rbbp-5, wdr-5.1, dpy-30 and ash-2. Within the complex, interacts with wdr-5.1, ash-2 and dpy-30. Also interacts with the SIN3S complex, which contains at least sin-3, hda-1, athp-1 and mrg-1. Interacts with sin-3, hda-1 and mrg-1.

The protein localises to the nucleus. Functionally, transcriptional activator that exhibits a unique DNA binding specificity for CpG motifs; enriched at promoters containing the trimethylation mark on histone H3 'Lys-4' (H3K4me3). Forms part of the SET2 complex and interacts with the SIN3S HDAC complex at promoters. Required for H3K4 trimethylation and plays a repressive role in the expression of heat shock and salt-inducible genes. Required for fertility, in cooperation with class I histone deacetylases (HDACs). The protein is CXXC-type zinc finger protein 1 of Caenorhabditis elegans.